Here is a 196-residue protein sequence, read N- to C-terminus: Adenylate kinase (196 aa).

An ATP-binding site is contributed by 10-15 (GAGKGT). Residues 30–59 (STGDMLRAAVSAGTEIGKRAKAVMDAGGLV) form an NMP region. AMP is bound by residues threonine 31, arginine 36, 57–59 (GLV), 85–88 (GYPR), and glutamine 92. Residues 126–142 (NRVAETIAAGGTVRSDD) form an LID region. Arginine 127 contacts ATP. AMP-binding residues include arginine 139 and arginine 150. ATP is bound at residue alanine 178.

Belongs to the adenylate kinase family. As to quaternary structure, monomer.

It localises to the cytoplasm. The enzyme catalyses AMP + ATP = 2 ADP. Its pathway is purine metabolism; AMP biosynthesis via salvage pathway; AMP from ADP: step 1/1. Catalyzes the reversible transfer of the terminal phosphate group between ATP and AMP. Plays an important role in cellular energy homeostasis and in adenine nucleotide metabolism. The polypeptide is Adenylate kinase (Agrobacterium fabrum (strain C58 / ATCC 33970) (Agrobacterium tumefaciens (strain C58))).